The following is a 269-amino-acid chain: METKQSIPLLMPYKMGPFNLSHRVVLAPLTRSRSYGNIPQPNAKLYYTQRTTPGGLLISESCVVSETSLGYPDLPGLWNRDQVEAWKPIVDAVHSKGGIFFCQIWHGGRVFHQDQPNGEAPVSSTDKPLMCKNMYGGQFKPPRRLRSDELPAIVNDFRIAARNAIEAGFDGVEVHGAHGYLIDQFLKDKVNDRSDQYGGSLENRCRFALEVIEAVVNEIGSDRVGIRLSPFADYMESGDSNPEALGLYLVQAMNKHGMESSTVTWLNLE.

Residues 28-30 (PLT) and glutamine 103 contribute to the FMN site. A substrate-binding site is contributed by 175–178 (HGAH). Catalysis depends on tyrosine 180, which acts as the Proton donor. An FMN-binding site is contributed by arginine 227.

This sequence belongs to the NADH:flavin oxidoreductase/NADH oxidase family. It depends on FMN as a cofactor.

In terms of biological role, putative oxophytodienoate reductase that may be involved in the biosynthesis or metabolism of oxylipin signaling molecules. The chain is Putative 12-oxophytodienoate reductase-like protein 2A from Arabidopsis thaliana (Mouse-ear cress).